The primary structure comprises 68 residues: U4-agatoxin-Ao1a (68 aa).

A signal peptide spans 1 to 25 (MKKSTVIVLSLAAFVLLSVMQFSAA). A propeptide spanning residues 26 to 36 (EDIKMEVEEQR) is cleaved from the precursor. 4 disulfide bridges follow: C39–C52, C46–C57, C51–C66, and C59–C64.

The protein belongs to the neurotoxin 33 family. As to expression, expressed by the venom gland.

It localises to the secreted. The protein is U4-agatoxin-Ao1a of Agelena orientalis (Funnel-web spider).